Consider the following 200-residue polypeptide: Recombination protein RecR (200 aa).

Residues 59–74 (CGTCGSLDVTDPCAVC) form a C4-type zinc finger. In terms of domain architecture, Toprim spans 82–177 (RLLCVVEEVG…PVTMLARGVP (96 aa)).

This sequence belongs to the RecR family.

In terms of biological role, may play a role in DNA repair. It seems to be involved in an RecBC-independent recombinational process of DNA repair. It may act with RecF and RecO. The protein is Recombination protein RecR of Caulobacter vibrioides (strain ATCC 19089 / CIP 103742 / CB 15) (Caulobacter crescentus).